A 253-amino-acid chain; its full sequence is Uracil-DNA glycosylase (253 aa).

Residue D79 is the Proton acceptor of the active site.

Belongs to the uracil-DNA glycosylase (UDG) superfamily. UNG family.

It localises to the cytoplasm. The enzyme catalyses Hydrolyzes single-stranded DNA or mismatched double-stranded DNA and polynucleotides, releasing free uracil.. In terms of biological role, excises uracil residues from the DNA which can arise as a result of misincorporation of dUMP residues by DNA polymerase or due to deamination of cytosine. The polypeptide is Uracil-DNA glycosylase (Xylella fastidiosa (strain M23)).